The primary structure comprises 725 residues: Gamma-tubulin complex component 5 (725 aa).

Positions 222 to 246 (TENEEKMSDNASASSGSDQGPSSRQ) are disordered. Residues 232 to 244 (ASASSGSDQGPSS) are compositionally biased toward low complexity.

Belongs to the TUBGCP family. As to quaternary structure, component of the gamma-tubulin ring complex (gTuRC) consisting of TUBGCP2, TUBGCP3, TUBGCP4, TUBGCP5 and TUBGCP6 and gamma-tubulin TUBG1 or TUBG2. TUBGCP2, TUBGCP3, TUBGCP4, TUBGCP5 and TUBGCP6 assemble in a 5:5:2:1:1 stoichiometry; each is associated with a gamma-tubulin, thereby arranging 14 gamma-tubulins in a helical manner. Gamma-tubulin at the first position is blocked by TUBGCP3 at the last position, allowing 13 protafilaments to grow into a microtubule. The gTuRC (via TUBGCP3 and TUBGCP6) interacts with ACTB and MZT1; the interactions form a luminal bridge that stabilizes the initial structure during complex assembly. The gTuRC (via TUBGCP2) interacts with MZT2A/MZT2B and CDK5RAP2 (via CM1 motif); the interactions play a role in gTuRC activation.

It is found in the cytoplasm. The protein resides in the cytoskeleton. It localises to the microtubule organizing center. Its subcellular location is the centrosome. Its function is as follows. Component of the gamma-tubulin ring complex (gTuRC) which mediates microtubule nucleation. The gTuRC regulates the minus-end nucleation of alpha-beta tubulin heterodimers that grow into microtubule protafilaments, a critical step in centrosome duplication and spindle formation. This Macaca fascicularis (Crab-eating macaque) protein is Gamma-tubulin complex component 5 (TUBGCP5).